Here is a 234-residue protein sequence, read N- to C-terminus: Phosphoribosylformylglycinamidine synthase subunit PurQ (234 aa).

The Glutamine amidotransferase type-1 domain maps to 5 to 234; it reads TVGIVVFPGS…ESLFAHLAGA (230 aa). The active-site Nucleophile is Cys89. Residues His206 and Glu208 contribute to the active site.

As to quaternary structure, part of the FGAM synthase complex composed of 1 PurL, 1 PurQ and 2 PurS subunits.

Its subcellular location is the cytoplasm. It catalyses the reaction N(2)-formyl-N(1)-(5-phospho-beta-D-ribosyl)glycinamide + L-glutamine + ATP + H2O = 2-formamido-N(1)-(5-O-phospho-beta-D-ribosyl)acetamidine + L-glutamate + ADP + phosphate + H(+). The catalysed reaction is L-glutamine + H2O = L-glutamate + NH4(+). It functions in the pathway purine metabolism; IMP biosynthesis via de novo pathway; 5-amino-1-(5-phospho-D-ribosyl)imidazole from N(2)-formyl-N(1)-(5-phospho-D-ribosyl)glycinamide: step 1/2. In terms of biological role, part of the phosphoribosylformylglycinamidine synthase complex involved in the purines biosynthetic pathway. Catalyzes the ATP-dependent conversion of formylglycinamide ribonucleotide (FGAR) and glutamine to yield formylglycinamidine ribonucleotide (FGAM) and glutamate. The FGAM synthase complex is composed of three subunits. PurQ produces an ammonia molecule by converting glutamine to glutamate. PurL transfers the ammonia molecule to FGAR to form FGAM in an ATP-dependent manner. PurS interacts with PurQ and PurL and is thought to assist in the transfer of the ammonia molecule from PurQ to PurL. This is Phosphoribosylformylglycinamidine synthase subunit PurQ from Chlorobaculum tepidum (strain ATCC 49652 / DSM 12025 / NBRC 103806 / TLS) (Chlorobium tepidum).